The sequence spans 187 residues: ATP synthase subunit b, chloroplastic (187 aa).

A helical transmembrane segment spans residues 29-49 (LAVVLGVLIYLGKGVCAGCIL).

This sequence belongs to the ATPase B chain family. In terms of assembly, F-type ATPases have 2 components, F(1) - the catalytic core - and F(0) - the membrane proton channel. F(1) has five subunits: alpha(3), beta(3), gamma(1), delta(1), epsilon(1). F(0) has four main subunits: a(1), b(1), b'(1) and c(10-14). The alpha and beta chains form an alternating ring which encloses part of the gamma chain. F(1) is attached to F(0) by a central stalk formed by the gamma and epsilon chains, while a peripheral stalk is formed by the delta, b and b' chains.

Its subcellular location is the plastid. The protein resides in the chloroplast thylakoid membrane. In terms of biological role, f(1)F(0) ATP synthase produces ATP from ADP in the presence of a proton or sodium gradient. F-type ATPases consist of two structural domains, F(1) containing the extramembraneous catalytic core and F(0) containing the membrane proton channel, linked together by a central stalk and a peripheral stalk. During catalysis, ATP synthesis in the catalytic domain of F(1) is coupled via a rotary mechanism of the central stalk subunits to proton translocation. Its function is as follows. Component of the F(0) channel, it forms part of the peripheral stalk, linking F(1) to F(0). This is ATP synthase subunit b, chloroplastic from Angiopteris evecta (Mule's foot fern).